We begin with the raw amino-acid sequence, 333 residues long: Ketol-acid reductoisomerase (NADP(+)) (333 aa).

Residues 1 to 179 form the KARI N-terminal Rossmann domain; the sequence is MFYDDNADLS…GGTRAGVIKT (179 aa). Residues 22 to 25, Ser48, Ser50, and 80 to 83 each bind NADP(+); these read YGSQ and DTAQ. His105 is a catalytic residue. Gly131 lines the NADP(+) pocket. Positions 180 to 325 constitute a KARI C-terminal knotted domain; the sequence is TFKDETETDL…KKLRDLMSWV (146 aa). Positions 188, 192, 224, and 228 each coordinate Mg(2+). Ser249 is a substrate binding site.

This sequence belongs to the ketol-acid reductoisomerase family. Mg(2+) is required as a cofactor.

It carries out the reaction (2R)-2,3-dihydroxy-3-methylbutanoate + NADP(+) = (2S)-2-acetolactate + NADPH + H(+). The catalysed reaction is (2R,3R)-2,3-dihydroxy-3-methylpentanoate + NADP(+) = (S)-2-ethyl-2-hydroxy-3-oxobutanoate + NADPH + H(+). It functions in the pathway amino-acid biosynthesis; L-isoleucine biosynthesis; L-isoleucine from 2-oxobutanoate: step 2/4. The protein operates within amino-acid biosynthesis; L-valine biosynthesis; L-valine from pyruvate: step 2/4. Functionally, involved in the biosynthesis of branched-chain amino acids (BCAA). Catalyzes an alkyl-migration followed by a ketol-acid reduction of (S)-2-acetolactate (S2AL) to yield (R)-2,3-dihydroxy-isovalerate. In the isomerase reaction, S2AL is rearranged via a Mg-dependent methyl migration to produce 3-hydroxy-3-methyl-2-ketobutyrate (HMKB). In the reductase reaction, this 2-ketoacid undergoes a metal-dependent reduction by NADPH to yield (R)-2,3-dihydroxy-isovalerate. The polypeptide is Ketol-acid reductoisomerase (NADP(+)) (Mycobacterium leprae (strain TN)).